We begin with the raw amino-acid sequence, 353 residues long: tRNA-specific 2-thiouridylase MnmA 1 (353 aa).

ATP is bound by residues 9 to 16 and Met-35; that span reads AMSGGVDS. The active-site Nucleophile is the Cys-98. A disulfide bridge connects residues Cys-98 and Cys-194. Residue Gly-122 coordinates ATP. The tract at residues 144–146 is interaction with tRNA; that stretch reads KDQ. Catalysis depends on Cys-194, which acts as the Cysteine persulfide intermediate. The interval 300 to 301 is interaction with tRNA; that stretch reads RY.

This sequence belongs to the MnmA/TRMU family.

The protein localises to the cytoplasm. It carries out the reaction S-sulfanyl-L-cysteinyl-[protein] + uridine(34) in tRNA + AH2 + ATP = 2-thiouridine(34) in tRNA + L-cysteinyl-[protein] + A + AMP + diphosphate + H(+). Catalyzes the 2-thiolation of uridine at the wobble position (U34) of tRNA, leading to the formation of s(2)U34. This is tRNA-specific 2-thiouridylase MnmA 1 from Clostridium botulinum (strain Okra / Type B1).